A 153-amino-acid chain; its full sequence is Pheromone-binding protein Gp-9 (153 aa).

The first 19 residues, 1–19, serve as a signal peptide directing secretion; it reads MKTLILHICIFALVAFASA. 3 disulfide bridges follow: cysteine 37/cysteine 77, cysteine 73/cysteine 129, and cysteine 118/cysteine 138.

This sequence belongs to the PBP/GOBP family. As to quaternary structure, homodimer.

The protein localises to the secreted. Colony queen number, a major feature of social organization, is associated with worker genotype for Gp-9. Colonies are headed by either a single reproductive queen (monogyne form) or multiple queens (polygyne form). Differences in worker Gp-9 genotypes between social forms may cause differences in workers' abilities to recognize queens and regulate their numbers. This chain is Pheromone-binding protein Gp-9, found in Solenopsis nigella gensterblumi (Fire ant).